Reading from the N-terminus, the 891-residue chain is Targeting protein for Xklp2 homolog (891 aa).

The segment covering 42-54 has biased composition (basic and acidic residues); the sequence is HENGVPLTFDDKA. Disordered stretches follow at residues 42 to 310, 418 to 454, 472 to 518, 723 to 746, and 789 to 891; these read HENG…KSCP, NLRKYVPSPSKPQGITKPRPFNFSDNRKRTHEESFSG, HTKT…NRHR, CSGVPDKKVKPPTQMAPFSVAEKG, and STKP…SHTS. The span at 108–124 shows a compositional bias: polar residues; sequence DDVSSAESETCEMSTDS. A compositionally biased stretch (acidic residues) spans 141-154; the sequence is DDEATVQESSDAEE. Residues 155 to 173 show a composition bias toward polar residues; sequence TQTLPSSCVDSSTAEMSTD. The segment covering 236–246 has biased composition (basic residues); it reads PTRKSPRLHSR. Positions 442-454 are enriched in basic and acidic residues; the sequence is DNRKRTHEESFSG. Polar residues predominate over residues 791–802; sequence KPMTDISNFSLN. 2 stretches are compositionally biased toward basic and acidic residues: residues 803 to 822 and 831 to 852; these read TERRAEDRKGYEQAKYERQL and REAEKEEELRQQISKQRADSIH.

This sequence belongs to the TPX2 family. Detectable in immature oocytes.

Its subcellular location is the nucleus. The protein localises to the cytoplasm. It is found in the cytoskeleton. It localises to the spindle. Functionally, spindle assembly factor. Required for normal assembly of mitotic spindles. This Patiria pectinifera (Starfish) protein is Targeting protein for Xklp2 homolog.